The sequence spans 87 residues: Spermatid-specific protein S1 (87 aa).

Positions 1–36 are disordered; it reads TKSRYRNRRSRPRRRYGRRMRKTRCRRKGRRISRRP.

Its subcellular location is the nucleus. It is found in the chromosome. Involved in nuclear basic protein transition: histones are replaced by spermatid specific proteins which are themselves replaced by protamines in late spermatids. This is Spermatid-specific protein S1 from Scyliorhinus canicula (Small-spotted catshark).